Consider the following 311-residue polypeptide: Peptide methionine sulfoxide reductase MsrA/MsrB 2 (311 aa).

Residues 1–155 are peptide methionine sulfoxide reductase A; sequence MHEIYLAGGC…PNGYCHINVN (155 aa). The active site involves Cys10. In terms of domain architecture, MsrB spans 172 to 295; it reads DEELKKTLSP…NSLSIRFIPK (124 aa). Residue Cys284 is the Nucleophile of the active site.

In the N-terminal section; belongs to the MsrA Met sulfoxide reductase family. The protein in the C-terminal section; belongs to the MsrB Met sulfoxide reductase family.

It carries out the reaction L-methionyl-[protein] + [thioredoxin]-disulfide + H2O = L-methionyl-(S)-S-oxide-[protein] + [thioredoxin]-dithiol. It catalyses the reaction [thioredoxin]-disulfide + L-methionine + H2O = L-methionine (S)-S-oxide + [thioredoxin]-dithiol. The enzyme catalyses L-methionyl-[protein] + [thioredoxin]-disulfide + H2O = L-methionyl-(R)-S-oxide-[protein] + [thioredoxin]-dithiol. Has an important function as a repair enzyme for proteins that have been inactivated by oxidation. Catalyzes the reversible oxidation-reduction of methionine sulfoxide in proteins to methionine. This is Peptide methionine sulfoxide reductase MsrA/MsrB 2 (msrAB2) from Streptococcus pneumoniae serotype 4 (strain ATCC BAA-334 / TIGR4).